We begin with the raw amino-acid sequence, 399 residues long: Delta(12) acyl-lipid conjugase (11E,13E-forming) (399 aa).

The tract at residues 11 to 30 (RNGGGPKKKMGPGQGLGPGE) is disordered. The next 2 helical transmembrane spans lie at 61-81 (FSYLLSDIALVSAFYYVADTY) and 93-113 (LAWPVYWFCQGAVLTGMWGIA). The Histidine box-1 signature appears at 114-118 (HDCGH). A helical membrane pass occupies residues 126–146 (LVDDVVGFLIHSLVFVPYFSF). The Histidine box-2 motif lies at 150-154 (HRRHH). The next 3 membrane-spanning stretches (helical) occupy residues 188-208 (VFIIFITLTLGWPMYLTFNIS), 232-252 (VLVHISNAGLVATGYLLYRIA), and 258-278 (GWLIRLYGVPLIVLNACVVLI). Residues 325 to 329 (HVVHH) carry the Histidine box-3 motif.

Belongs to the fatty acid desaturase type 1 family. Expressed in developing seeds, but not in leaves.

It localises to the membrane. It carries out the reaction a (9Z,12Z)-octadecadienoyl-containing glycerolipid + 2 Fe(II)-[cytochrome b5] + O2 + 2 H(+) = a (9Z,11E,13E)-octadecatrienoyl-containing glycerolipid + 2 Fe(III)-[cytochrome b5] + 2 H2O. The enzyme catalyses (9Z,12Z,15Z)-octadecatrienoyl-containing glycerolipid + 2 Fe(II)-[cytochrome b5] + O2 + 2 H(+) = a (9Z,11E,13E,15Z)-octadecatetraenoyl-containing glycerolipid + 2 Fe(III)-[cytochrome b5] + 2 H2O. It participates in lipid metabolism; polyunsaturated fatty acid biosynthesis. Converts linoleic acid to alpha-eleostearic acid (18:3(9Z,11E,13E)) and alpha-linolenic acid to alpha-parinaric acid (18:4(9Z,11E, 13E, 15Z)). Converts a single cis double bond at carbon 12 to two conjugated trans bonds at positions 11 and 13. The polypeptide is Delta(12) acyl-lipid conjugase (11E,13E-forming) (Momordica charantia (Bitter gourd)).